A 72-amino-acid polypeptide reads, in one-letter code: MANNNSSNELVVPGVQQALDQMKYEIAQEFGVQLGADSTSRANGSVGGEITKRLVQMAEQQFGGQQYGQQQK.

This sequence belongs to the alpha/beta-type SASP family.

In terms of biological role, SASP are bound to spore DNA. They are double-stranded DNA-binding proteins that cause DNA to change to an a-like conformation. They protect the DNA backbone from chemical and enzymatic cleavage and are thus involved in dormant spore's high resistance to UV light. This chain is Small, acid-soluble spore protein 1 (Sh-1), found in Halobacillus halophilus (strain ATCC 35676 / DSM 2266 / JCM 20832 / KCTC 3685 / LMG 17431 / NBRC 102448 / NCIMB 2269) (Sporosarcina halophila).